The chain runs to 105 residues: U-scoloptoxin(10)-Sm3a (105 aa).

The N-terminal stretch at 1–23 is a signal peptide; that stretch reads MYKFIFIFFTVFFLINIIEESXT.

Belongs to the scoloptoxin-10 family. Contains 3 disulfide bonds. Expressed by the venom gland.

It localises to the secreted. This is U-scoloptoxin(10)-Sm3a from Scolopendra morsitans (Tanzanian blue ringleg centipede).